Reading from the N-terminus, the 437-residue chain is Trigger factor (437 aa).

Residues 174 to 260 enclose the PPIase FKBP-type domain; the sequence is GDFVQISFEG…VKSLKKKIFP (87 aa).

It belongs to the FKBP-type PPIase family. Tig subfamily.

It localises to the cytoplasm. The enzyme catalyses [protein]-peptidylproline (omega=180) = [protein]-peptidylproline (omega=0). Functionally, involved in protein export. Acts as a chaperone by maintaining the newly synthesized protein in an open conformation. Functions as a peptidyl-prolyl cis-trans isomerase. This chain is Trigger factor, found in Koribacter versatilis (strain Ellin345).